Reading from the N-terminus, the 89-residue chain is Small ribosomal subunit protein uS15 (89 aa).

It belongs to the universal ribosomal protein uS15 family. As to quaternary structure, part of the 30S ribosomal subunit. Forms a bridge to the 50S subunit in the 70S ribosome, contacting the 23S rRNA.

One of the primary rRNA binding proteins, it binds directly to 16S rRNA where it helps nucleate assembly of the platform of the 30S subunit by binding and bridging several RNA helices of the 16S rRNA. Functionally, forms an intersubunit bridge (bridge B4) with the 23S rRNA of the 50S subunit in the ribosome. The chain is Small ribosomal subunit protein uS15 from Buchnera aphidicola subsp. Acyrthosiphon pisum (strain 5A).